We begin with the raw amino-acid sequence, 807 residues long: MYNHKEIEKKWQKIWDQSKAFKTGNKSDKKYYVLDMFPYPSGSGLHVGHPEGYTATDIIARFKRLKGFDVLHPMGWDAFGLPAEQYAISTGNNPNEFTQKNIATFKKQIKSLGLSYDFDKEVNTTDPKFYEQTQWIFKELYKKGLAVLADIDVNWCEELGTVLANEEVLIDKDGNKVSERGSFPVVKKKMRQWVLKITNYADKLLEGLEDLDWENSLKLLQKNWIGKSTGTKVKFALELLDESIEVFTTRIETIFGATFLTISPEHPLVEKIVTSENKEKVKDFIKEFEKLDDRQKADKNEKNGIFTGSYAINPFNQKKIPIWIGDFVLLSYGTGAIMSVPAHDKRDYEFANKYGLEIKQVIVSKENVELPYLESGHLINSSEFNGLSSKEAIEKLNQYVEKNNLGQVETFYKLRDWIFSRQRYWGEPFPVAFDDENNVYLIDGLVELPFMENIKPSKNGQSPLFNNKKWLYFEKDGKKLTRETNTMPQWAGSNWYYLAYILKNADGSYEKLDSEEAKKRFKKWLPVDLYIGGQEHAVLHLLYSRFWHRFLYDIGVVPTKEPFQKVVNQGMILGTDGQKMSKSRGNIINPSEIVDELGADTLRVYEMFMGPLTDDKDWQVESIKGIRKWLERVYRLFEMFFDGQKTIEKSNEDHLILSQYNKLIKEIENEVELLKFNTAISKLMVFVNLLYKVEKIPSWEILKNFALILSLFAPHIAEELLEKMNQKQVKDQIWPTYDPTYLESNLTKYVIQINGKVRAIVDFELDKTQEEVLAKAMQIEKIKTLLENKNIIKVIFVANKVLNLIVK.

The 'HIGH' region motif lies at 38-49 (PYPSGSGLHVGH). The 'KMSKS' region signature appears at 579 to 583 (KMSKS). An ATP-binding site is contributed by Lys582.

The protein belongs to the class-I aminoacyl-tRNA synthetase family.

The protein localises to the cytoplasm. It carries out the reaction tRNA(Leu) + L-leucine + ATP = L-leucyl-tRNA(Leu) + AMP + diphosphate. The sequence is that of Leucine--tRNA ligase from Mycoplasmopsis pulmonis (strain UAB CTIP) (Mycoplasma pulmonis).